The primary structure comprises 312 residues: Malate dehydrogenase (312 aa).

Residues 12-17 and Asp-36 contribute to the NAD(+) site; that span reads GAGFTG. Positions 87 and 93 each coordinate substrate. NAD(+) is bound by residues Asn-100 and 123-125; that span reads LTN. Asn-125 lines the substrate pocket. Position 149 is a phosphoserine (Ser-149). Residue Arg-156 participates in substrate binding. His-180 (proton acceptor) is an active-site residue.

The protein belongs to the LDH/MDH superfamily. MDH type 3 family.

The catalysed reaction is (S)-malate + NAD(+) = oxaloacetate + NADH + H(+). Its function is as follows. Catalyzes the reversible oxidation of malate to oxaloacetate. The chain is Malate dehydrogenase from Geobacillus kaustophilus (strain HTA426).